The primary structure comprises 637 residues: Probable potassium transport system protein Kup (637 aa).

Transmembrane regions (helical) follow at residues 24-44 (LAIA…LYAL), 64-84 (VISL…LLFV), 113-133 (AGAL…DAVI), 151-171 (PHLS…LFWI), 182-202 (LFGP…VYHI), 225-245 (LLQA…AEAL), 261-281 (AYGL…ALLI), 290-310 (PFFL…STVA), 351-371 (IYVP…VIGF), 381-401 (YGIA…VVMV), 409-429 (LLVG…FGAN), and 433-453 (VAQG…LLMT).

The protein belongs to the HAK/KUP transporter (TC 2.A.72) family.

It is found in the cell inner membrane. The enzyme catalyses K(+)(in) + H(+)(in) = K(+)(out) + H(+)(out). Its function is as follows. Transport of potassium into the cell. Likely operates as a K(+):H(+) symporter. The polypeptide is Probable potassium transport system protein Kup (Burkholderia ambifaria (strain MC40-6)).